We begin with the raw amino-acid sequence, 198 residues long: Ribonuclease HII (198 aa).

The 189-residue stretch at 10 to 198 folds into the RNase H type-2 domain; that stretch reads QLVAGVDEVG…PVKRALGLAS (189 aa). D16, E17, and D108 together coordinate a divalent metal cation.

This sequence belongs to the RNase HII family. The cofactor is Mn(2+). Mg(2+) serves as cofactor.

Its subcellular location is the cytoplasm. The enzyme catalyses Endonucleolytic cleavage to 5'-phosphomonoester.. Functionally, endonuclease that specifically degrades the RNA of RNA-DNA hybrids. This is Ribonuclease HII from Escherichia coli O6:H1 (strain CFT073 / ATCC 700928 / UPEC).